Here is a 254-residue protein sequence, read N- to C-terminus: Mitochondrial inner membrane protease ATP23 homolog (254 aa).

The tract at residues 1 to 32 is disordered; that stretch reads MAQSGAKAADLSREPPGEQKPSPSSRQNEEDL. Position 133 (His-133) interacts with a divalent metal cation. The active site involves Glu-134. Residue His-137 coordinates a divalent metal cation.

This sequence belongs to the peptidase M76 family.

The protein is Mitochondrial inner membrane protease ATP23 homolog (atp23) of Danio rerio (Zebrafish).